Here is a 215-residue protein sequence, read N- to C-terminus: Pyridoxine/pyridoxamine 5'-phosphate oxidase (215 aa).

Substrate contacts are provided by residues 9-12 (RRDY) and K69. FMN is bound by residues 64 to 69 (RVLLLK), 79 to 80 (FS), K86, and Q108. Positions 126, 130, and 134 each coordinate substrate. FMN is bound by residues 143–144 (QS) and W188. 194–196 (RLH) is a substrate binding site. R198 lines the FMN pocket.

The protein belongs to the pyridoxamine 5'-phosphate oxidase family. As to quaternary structure, homodimer. Requires FMN as cofactor.

The catalysed reaction is pyridoxamine 5'-phosphate + O2 + H2O = pyridoxal 5'-phosphate + H2O2 + NH4(+). It catalyses the reaction pyridoxine 5'-phosphate + O2 = pyridoxal 5'-phosphate + H2O2. It functions in the pathway cofactor metabolism; pyridoxal 5'-phosphate salvage; pyridoxal 5'-phosphate from pyridoxamine 5'-phosphate: step 1/1. Its pathway is cofactor metabolism; pyridoxal 5'-phosphate salvage; pyridoxal 5'-phosphate from pyridoxine 5'-phosphate: step 1/1. In terms of biological role, catalyzes the oxidation of either pyridoxine 5'-phosphate (PNP) or pyridoxamine 5'-phosphate (PMP) into pyridoxal 5'-phosphate (PLP). In Azotobacter vinelandii (strain DJ / ATCC BAA-1303), this protein is Pyridoxine/pyridoxamine 5'-phosphate oxidase.